Reading from the N-terminus, the 98-residue chain is Keratin, high sulfur matrix protein, IIIB4 (98 aa).

Ala-1 is subject to N-acetylalanine.

Belongs to the KRTAP type 3 family. In terms of assembly, interacts with wool keratins. Wool.

In terms of biological role, in the wool cortex, wool keratin intermediate filaments are embedded in an interfilamentous matrix, consisting of hair keratin-associated proteins (KRTAP), which are essential for the formation of a rigid and resistant wool shaft through their extensive disulfide bond cross-linking with abundant cysteine residues of wool keratins. The matrix proteins include the high-sulfur and high-glycine-tyrosine keratins. This Ovis aries (Sheep) protein is Keratin, high sulfur matrix protein, IIIB4.